The following is a 396-amino-acid chain: Transcriptional regulator Myc-B (396 aa).

Thr-56 carries an O-linked (GlcNAc) threonine glycan. Positions 79-87 (EMVSEFLGD) match the 9aaTAD motif. Disordered regions lie at residues 183–251 (KPCK…THQS) and 298–318 (NRKCASPRTSDSEDNDKRRTH). Over residues 191 to 212 (PASTTLPLDTPPNSGSSSSSSD) the composition is skewed to low complexity. Residues 213 to 230 (SESDDEDDEDEEEEEEID) are compositionally biased toward acidic residues. Residues 233 to 244 (TVEKRKSVKKSD) show a composition bias toward basic and acidic residues. Residues 313–365 (DKRRTHNVLERQRRNELKLSFFALRDVIPDVANNEKAAKVVILKKATECIASM) form the bHLH domain. The interval 372 to 393 (LISLKEQLRRKCEHLKQRLEQL) is leucine-zipper.

In terms of assembly, efficient DNA binding requires dimerization with another bHLH protein. Binds DNA as a heterodimer with max.

Its subcellular location is the nucleus. Its function is as follows. Transcription factor that binds DNA in a non-specific manner, yet also specifically recognizes the core sequence 5'-CAC[GA]TG-3'. Activates the transcription of growth-related genes. This Danio rerio (Zebrafish) protein is Transcriptional regulator Myc-B.